A 195-amino-acid chain; its full sequence is Cyclin-dependent kinase inhibitor 7 (195 aa).

Positions 1–11 are enriched in basic and acidic residues; that stretch reads MSETKPKRDSE. 3 disordered regions span residues 1–50, 61–80, and 117–154; these read MSET…SVSD, EEED…SSET, and SSEN…TQAE. 2 stretches are compositionally biased toward low complexity: residues 37 to 50 and 68 to 80; these read SSSS…SVSD and SSSI…SSET. Thr-151 bears the Phosphothreonine; by KIN10 mark.

This sequence belongs to the CDI family. ICK/KRP subfamily. Specifically interacts with CDKA-1, but not with CDKB1-1. Interacts with CYCD4-1. Binds to FBL17. In terms of processing, ubiquitinated by SCF(FBL17). Ubiquitination leads to its subsequent degradation, thus controlling cell cycle progression. In terms of tissue distribution, expressed in flowers, in developing pollen, and at lower levels in roots and leaves.

The protein resides in the nucleus. It is found in the nucleoplasm. Functionally, binds and inhibits CYCD2-1/CDKA-1 complex kinase activity. May target specifically CDKA-1. The sequence is that of Cyclin-dependent kinase inhibitor 7 (KRP7) from Arabidopsis thaliana (Mouse-ear cress).